A 351-amino-acid polypeptide reads, in one-letter code: uncharacterized protein (351 aa).

Mn(2+) is bound by residues D215, D226, H290, E319, and E333.

It belongs to the peptidase M24B family. Requires Mn(2+) as cofactor.

This is an uncharacterized protein from Staphylococcus haemolyticus (strain JCSC1435).